Here is a 107-residue protein sequence, read N- to C-terminus: Large ribosomal subunit protein uL24 (107 aa).

It belongs to the universal ribosomal protein uL24 family. In terms of assembly, part of the 50S ribosomal subunit.

In terms of biological role, one of two assembly initiator proteins, it binds directly to the 5'-end of the 23S rRNA, where it nucleates assembly of the 50S subunit. Its function is as follows. One of the proteins that surrounds the polypeptide exit tunnel on the outside of the subunit. This chain is Large ribosomal subunit protein uL24, found in Caldanaerobacter subterraneus subsp. tengcongensis (strain DSM 15242 / JCM 11007 / NBRC 100824 / MB4) (Thermoanaerobacter tengcongensis).